Consider the following 434-residue polypeptide: Zinc finger and BTB domain-containing protein 8A (434 aa).

Positions 24 to 92 (CDCSILVEGK…VYSGKLSLTG (69 aa)) constitute a BTB domain. The interval 134-238 (SLSDKDTGSN…SGNHVSQSEE (105 aa)) is disordered. 2 positions are modified to phosphoserine: serine 161 and serine 167. Glycyl lysine isopeptide (Lys-Gly) (interchain with G-Cter in SUMO2) cross-links involve residues lysine 172, lysine 176, and lysine 193. Residues 192 to 202 (AKHEQRKEPSK) are compositionally biased toward basic and acidic residues. Over residues 226–238 (QTDSGNHVSQSEE) the composition is skewed to polar residues. C2H2-type zinc fingers lie at residues 275-297 (FKCP…LRCH) and 303-326 (YPCQ…RTIH). A Glycyl lysine isopeptide (Lys-Gly) (interchain with G-Cter in SUMO2) cross-link involves residue lysine 430.

It is found in the nucleus. Functionally, may be involved in transcriptional regulation. In Mus musculus (Mouse), this protein is Zinc finger and BTB domain-containing protein 8A (Zbtb8a).